Consider the following 124-residue polypeptide: Small ribosomal subunit protein uS12 (124 aa).

Residue Asp-89 is modified to 3-methylthioaspartic acid. Residues 105-124 (QGVKNRKQARSKYGAKMEKK) are disordered.

This sequence belongs to the universal ribosomal protein uS12 family. As to quaternary structure, part of the 30S ribosomal subunit. Contacts proteins S8 and S17. May interact with IF1 in the 30S initiation complex.

Functionally, with S4 and S5 plays an important role in translational accuracy. Interacts with and stabilizes bases of the 16S rRNA that are involved in tRNA selection in the A site and with the mRNA backbone. Located at the interface of the 30S and 50S subunits, it traverses the body of the 30S subunit contacting proteins on the other side and probably holding the rRNA structure together. The combined cluster of proteins S8, S12 and S17 appears to hold together the shoulder and platform of the 30S subunit. The protein is Small ribosomal subunit protein uS12 of Renibacterium salmoninarum (strain ATCC 33209 / DSM 20767 / JCM 11484 / NBRC 15589 / NCIMB 2235).